We begin with the raw amino-acid sequence, 337 residues long: Vacuolar protein sorting-associated protein 26B (337 aa).

The segment at 311-337 (SQRFEGTSHPETRPQHSGAAAVEQEQE) is disordered.

This sequence belongs to the VPS26 family. Component of the heterotrimeric retromer cargo-selective complex (CSC) which is believed to associate with variable sorting nexins to form functionally distinct retromer complex variants.

Its subcellular location is the cytoplasm. The protein resides in the membrane. It is found in the endosome. Its function is as follows. Acts as a component of the retromer cargo-selective complex (CSC). The CSC is believed to be the core functional component of retromer or respective retromer complex variants acting to prevent missorting of selected transmembrane cargo proteins into the lysosomal degradation pathway. Retromer mediates retrograde transport of cargo proteins from endosomes to the trans-Golgi network (TGN). This is Vacuolar protein sorting-associated protein 26B (vps26b) from Xenopus tropicalis (Western clawed frog).